The primary structure comprises 501 residues: Ribonuclease Y (501 aa).

The helical transmembrane segment at 7–27 (LVVIALLGALTLLTAGHVLAL) threads the bilayer. Residues 190–256 (VVRAVPLPEE…RLTLEKLVAD (67 aa)) enclose the KH domain. The HD domain occupies 316–409 (VLAHLVESAH…TQAADAISGG (94 aa)).

Belongs to the RNase Y family.

It localises to the cell membrane. Its function is as follows. Endoribonuclease that initiates mRNA decay. In Thermobifida fusca (strain YX), this protein is Ribonuclease Y.